Here is a 424-residue protein sequence, read N- to C-terminus: Proline--tRNA ligase (424 aa).

It belongs to the class-II aminoacyl-tRNA synthetase family. ProS type 2 subfamily. As to quaternary structure, homodimer.

Its subcellular location is the cytoplasm. It catalyses the reaction tRNA(Pro) + L-proline + ATP = L-prolyl-tRNA(Pro) + AMP + diphosphate. Catalyzes the attachment of proline to tRNA(Pro) in a two-step reaction: proline is first activated by ATP to form Pro-AMP and then transferred to the acceptor end of tRNA(Pro). The chain is Proline--tRNA ligase from Ehrlichia chaffeensis (strain ATCC CRL-10679 / Arkansas).